Reading from the N-terminus, the 103-residue chain is Large ribosomal subunit protein bL21 (103 aa).

Belongs to the bacterial ribosomal protein bL21 family. Part of the 50S ribosomal subunit. Contacts protein L20.

Functionally, this protein binds to 23S rRNA in the presence of protein L20. In Beijerinckia indica subsp. indica (strain ATCC 9039 / DSM 1715 / NCIMB 8712), this protein is Large ribosomal subunit protein bL21.